We begin with the raw amino-acid sequence, 392 residues long: tRNA-specific 2-thiouridylase MnmA (392 aa).

ATP contacts are provided by residues 18–25 (AMSGGVDS) and Leu44. Cys112 functions as the Nucleophile in the catalytic mechanism. Cysteines 112 and 208 form a disulfide. Residue Gly136 coordinates ATP. The interval 158 to 160 (RDQ) is interaction with tRNA. Cys208 serves as the catalytic Cysteine persulfide intermediate.

Belongs to the MnmA/TRMU family.

Its subcellular location is the cytoplasm. It catalyses the reaction S-sulfanyl-L-cysteinyl-[protein] + uridine(34) in tRNA + AH2 + ATP = 2-thiouridine(34) in tRNA + L-cysteinyl-[protein] + A + AMP + diphosphate + H(+). In terms of biological role, catalyzes the 2-thiolation of uridine at the wobble position (U34) of tRNA, leading to the formation of s(2)U34. In Rhodospirillum centenum (strain ATCC 51521 / SW), this protein is tRNA-specific 2-thiouridylase MnmA.